The chain runs to 293 residues: Cyclohexadienyl dehydrogenase (293 aa).

Residues 5 to 293 (KHIAIIGLGL…ALKTDHDIRP (289 aa)) enclose the Prephenate/arogenate dehydrogenase domain. 6–30 (HIAIIGLGLIGSSAARATKAYCPDV) lines the NAD(+) pocket.

Belongs to the prephenate/arogenate dehydrogenase family. Homodimer.

The catalysed reaction is L-arogenate + NAD(+) = L-tyrosine + CO2 + NADH. The enzyme catalyses prephenate + NAD(+) = 3-(4-hydroxyphenyl)pyruvate + CO2 + NADH. It functions in the pathway amino-acid biosynthesis; L-tyrosine biosynthesis; (4-hydroxyphenyl)pyruvate from prephenate (NAD(+) route): step 1/1. Its pathway is amino-acid biosynthesis; L-tyrosine biosynthesis; L-tyrosine from L-arogenate (NAD(+) route): step 1/1. With respect to regulation, insensitive to feedback inhibition by L-tyrosine. Can function as either prephenate dehydrogenase or as arogenate dehydrogenase in the biosynthesis of L-tyrosine. Catalyzes two analogous reactions: converts prephenate to 4-hydroxyphenylpyruvate and transforms L-arogenate to L-tyrosine. Is not able to utilize NADP(+) instead of NAD(+) as cosubstrate. The sequence is that of Cyclohexadienyl dehydrogenase from Zymomonas mobilis subsp. mobilis (strain ATCC 31821 / ZM4 / CP4).